We begin with the raw amino-acid sequence, 165 residues long: Basic leucine zipper 43 (165 aa).

One can recognise a bZIP domain in the interval 70–133 (NERKQKRKIS…EKVIEENVQL (64 aa)). The segment at 72-93 (RKQKRKISNRESARRSRMRKQR) is basic motif. The leucine-zipper stretch occupies residues 98-112 (LWSQVMWLRDENHQL).

Forms heterodimers with BZIP34 and BZIP61.

The protein resides in the nucleus. Functionally, probable transcription factor involved in somatic embryogenesis. Acts as a positive regulator of BHLH109. This chain is Basic leucine zipper 43, found in Arabidopsis thaliana (Mouse-ear cress).